The sequence spans 405 residues: Diaminopimelate decarboxylase (405 aa).

Lysine 46 bears the N6-(pyridoxal phosphate)lysine mark. Pyridoxal 5'-phosphate is bound by residues glycine 225 and 259-262 (EPGR). Substrate contacts are provided by arginine 262, arginine 298, and tyrosine 302. Cysteine 329 functions as the Proton donor in the catalytic mechanism. Substrate contacts are provided by glutamate 330 and tyrosine 358. Tyrosine 358 is a binding site for pyridoxal 5'-phosphate.

Belongs to the Orn/Lys/Arg decarboxylase class-II family. LysA subfamily. Homodimer. Pyridoxal 5'-phosphate serves as cofactor.

It carries out the reaction meso-2,6-diaminopimelate + H(+) = L-lysine + CO2. Its pathway is amino-acid biosynthesis; L-lysine biosynthesis via DAP pathway; L-lysine from DL-2,6-diaminopimelate: step 1/1. Specifically catalyzes the decarboxylation of meso-diaminopimelate (meso-DAP) to L-lysine. The protein is Diaminopimelate decarboxylase of Helicobacter pylori (strain J99 / ATCC 700824) (Campylobacter pylori J99).